A 136-amino-acid polypeptide reads, in one-letter code: Acidic phospholipase A2 EC-I (136 aa).

An N-terminal signal peptide occupies residues 1–16 (MKTLWIVAVWLIAVEG). Intrachain disulfides connect C42–C129, C44–C60, C59–C111, C65–C136, C66–C104, C73–C97, and C91–C102. The Ca(2+) site is built by Y43, G45, and G47. H63 is a catalytic residue. D64 contributes to the Ca(2+) binding site. Residue D105 is part of the active site. The tract at residues 112 to 133 (LGENVNTYDKKYKSYEDCTEEV) is may be responsible for inhibition of the platelet-aggregation activity.

The protein belongs to the phospholipase A2 family. Group II subfamily. D49 sub-subfamily. Monomer. The cofactor is Ca(2+). In terms of tissue distribution, expressed by the venom gland.

The protein localises to the secreted. The catalysed reaction is a 1,2-diacyl-sn-glycero-3-phosphocholine + H2O = a 1-acyl-sn-glycero-3-phosphocholine + a fatty acid + H(+). Snake venom phospholipase A2 (PLA2) that inhibits human platelet aggregation induced by ADP, collagen and epinephrin (possibly by binding the platelet receptor alpha-IIb/beta-III) and induces mild edema in the foot pads of mice. PLA2 catalyzes the calcium-dependent hydrolysis of the 2-acyl groups in 3-sn-phosphoglycerides. The protein is Acidic phospholipase A2 EC-I of Echis carinatus (Saw-scaled viper).